The primary structure comprises 185 residues: C-type lectin domain family 5 member A (185 aa).

Over 1–4 (MNWH) the chain is Cytoplasmic. A helical; Signal-anchor for type II membrane protein transmembrane segment spans residues 5-27 (MIISGLIVVVLKIVGMTFFLLYF). At 28 to 185 (PQIFGEHNVS…YRSICEKSAQ (158 aa)) the chain is on the extracellular side. Residues Asn-35 and Asn-55 are each glycosylated (N-linked (GlcNAc...) asparagine). Residues Cys-68 and Cys-79 are joined by a disulfide bond. Residues 75–181 (HQGRCFFLST…CDVNYRSICE (107 aa)) form the C-type lectin domain. 4 N-linked (GlcNAc...) asparagine glycosylation sites follow: Asn-90, Asn-117, Asn-141, and Asn-146. Cystine bridges form between Cys-96/Cys-180 and Cys-158/Cys-172.

As to quaternary structure, monomer. Homodimer. The majority of CLEC5A is expressed as a monomeric form on macrophages. Interacts with TYROBP/DAP12. The interaction with TYROBP is required for CLEC5 cell surface expression. Interacts with HCST/DAP10. Forms a CLEC5A/TYROBP/HCST trimolecular complex depending almost solely on TYROBP. In terms of processing, N-glycosylated. Contains sialic acid residues. Constitutively expressed in monocytes and macrophages.

The protein resides in the cell membrane. Functionally, functions as a positive regulator of osteoclastogenesis. Cell surface receptor that signals via TYROBP. Regulates inflammatory responses. This Sus scrofa (Pig) protein is C-type lectin domain family 5 member A (CLEC5A).